A 210-amino-acid polypeptide reads, in one-letter code: Large ribosomal subunit protein uL3 (210 aa).

Residues Arg125–Pro151 are disordered.

It belongs to the universal ribosomal protein uL3 family. Part of the 50S ribosomal subunit. Forms a cluster with proteins L14 and L19.

Its function is as follows. One of the primary rRNA binding proteins, it binds directly near the 3'-end of the 23S rRNA, where it nucleates assembly of the 50S subunit. The chain is Large ribosomal subunit protein uL3 from Bacillus mycoides (strain KBAB4) (Bacillus weihenstephanensis).